We begin with the raw amino-acid sequence, 388 residues long: MRYLTAGESHGPSLTAIIEGIPAGLTLHPADIDHELQRRQGGYGRGARMSIETDRVQISSGVRHGKTTGAPITLTVINKDHQKWLDVMAVGDIEETLKLKRRVKHPRPGHADLVGGIKYHFNDLRDALERSSARETTMRVAVGAVAKRILAELGIDMLHHILIFGGITITIPSKLSFRELQERALHSELSIVNPKQEEEIKTYIDKIKKEGDTIGGIIETIVQGVPAGLGSYVQWDKKLDAKLAQAVLSINAFKGVEFGVGFDMGFQKGSQVMDEITWTPTQGYGRQTNHLGGFEGGMTTGQPLVVKGVMKPIPTLYKPLMSVDIDSHEPYKATVERSDPTALPAAGVIMENVVATVLAKEILETFSSTTMSELQKAFSDYRAYVKQF.

The NADP(+) site is built by Arg39 and Arg45. FMN contacts are provided by residues 130 to 132, 251 to 252, Gly296, 311 to 315, and Arg337; these read RSS, NA, and KPIPT.

This sequence belongs to the chorismate synthase family. As to quaternary structure, homotetramer. FMNH2 is required as a cofactor.

It catalyses the reaction 5-O-(1-carboxyvinyl)-3-phosphoshikimate = chorismate + phosphate. It functions in the pathway metabolic intermediate biosynthesis; chorismate biosynthesis; chorismate from D-erythrose 4-phosphate and phosphoenolpyruvate: step 7/7. In terms of biological role, catalyzes the anti-1,4-elimination of the C-3 phosphate and the C-6 proR hydrogen from 5-enolpyruvylshikimate-3-phosphate (EPSP) to yield chorismate, which is the branch point compound that serves as the starting substrate for the three terminal pathways of aromatic amino acid biosynthesis. This reaction introduces a second double bond into the aromatic ring system. The sequence is that of Chorismate synthase from Streptococcus pyogenes serotype M12 (strain MGAS2096).